We begin with the raw amino-acid sequence, 291 residues long: ATP synthase gamma chain (291 aa).

This sequence belongs to the ATPase gamma chain family. F-type ATPases have 2 components, CF(1) - the catalytic core - and CF(0) - the membrane proton channel. CF(1) has five subunits: alpha(3), beta(3), gamma(1), delta(1), epsilon(1). CF(0) has three main subunits: a, b and c.

Its subcellular location is the cell membrane. In terms of biological role, produces ATP from ADP in the presence of a proton gradient across the membrane. The gamma chain is believed to be important in regulating ATPase activity and the flow of protons through the CF(0) complex. The protein is ATP synthase gamma chain of Buchnera aphidicola subsp. Schizaphis graminum (strain Sg).